The following is a 570-amino-acid chain: Ferroportin (570 aa).

Over 1-23 the chain is Cytoplasmic; sequence MTKARDQTHQEGCCGSLANYLTS. The chain crosses the membrane as a helical span at residues 24–53; it reads AKFLLYLGHSLSTWGDRMWHFAVSVFLVEL. Fe cation contacts are provided by Asp39 and His43. Topologically, residues 54–57 are extracellular; the sequence is YGNS. Residues 58-84 traverse the membrane as a helical segment; the sequence is LLLTAVYGLVVAGSVLVLGAIIGDWVD. Over 85–87 the chain is Cytoplasmic; the sequence is KNA. The chain crosses the membrane as a helical span at residues 88-118; the sequence is RLKVAQTSLVVQNVSVILCGIILMMVFLHKN. Over 119 to 126 the chain is Extracellular; sequence ELLTMYHG. A helical membrane pass occupies residues 127–162; it reads WVLTVCYILIITIANIANLASTATAITIQRDWIVVV. The Cytoplasmic portion of the chain corresponds to 163-164; the sequence is AG. The helical transmembrane segment at 165–195 threads the bilayer; it reads ENRSRLADMNATIRRIDQLTNILAPMAVGQI. Over 196-202 the chain is Extracellular; that stretch reads MTFGSPV. Residues 203–229 form a helical membrane-spanning segment; that stretch reads IGCGFISGWNLVSMCVEYFLLWKVYQK. At 230–306 the chain is on the cytoplasmic side; it reads TPALAVKAAL…DGWVSYYNQP (77 aa). The chain crosses the membrane as a helical span at residues 307–333; sequence VFLAGMGLAFLYMTVLGFDCITTGYAY. Cys326 contributes to the Fe cation binding site. Over 334-338 the chain is Extracellular; the sequence is TQGLS. The chain crosses the membrane as a helical span at residues 339–366; that stretch reads GSILSILMGASAITGIMGTVAFTWLRRK. Residues 367-368 are Cytoplasmic-facing; the sequence is CG. Residues 369 to 391 traverse the membrane as a helical segment; sequence LVRTGLFSGLAQLSCLILCVISV. Over 392-452 the chain is Extracellular; it reads FMPGSPLDLS…EMSTKPIPIV (61 aa). Asn437 carries N-linked (GlcNAc...) asparagine glycosylation. Residues 453–482 form a helical membrane-spanning segment; it reads SVSLLFAGVIAARIGLWSFDLTVTQLLQEN. Residues 483-487 lie on the Cytoplasmic side of the membrane; it reads VIESE. The chain crosses the membrane as a helical span at residues 488–512; that stretch reads RGIINGVQNSMNYLLDLLHFIMVIL. His506 is a binding site for Fe cation. Topologically, residues 513-515 are extracellular; sequence APN. Residues 516–541 form a helical membrane-spanning segment; it reads PEAFGLLVLISVSFVAMGHLMYFRFA. At 542-570 the chain is on the cytoplasmic side; sequence QKTLGNQIFVCGPDEKEVTDENQPNTSVV.

Belongs to the ferroportin (FP) (TC 2.A.100) family. SLC40A subfamily. Identified in a complex with STOM. Interacts with HAMP; affinity of the peptide hormone HAMP for SLC40A1 increases by 80-fold in the presence of iron and the interaction promotes SLC40A1 ubiquitination and degradation. Part of a complex composed of SLC40A1/ferroportin, TF/transferrin and HEPH/hephaestin that transfers iron from cells to transferrin. Post-translationally, polyubiquitinated by RNF217; leading to proteasomal degradation. Under conditions of high systemic iron levels, both the hormone peptide hepcidin/HAMP and holo(iron bound)-transferrin/TF induce the ubiquitination, internalization and proteasomal degradation of SLC40A1 to control iron release from cells. In terms of tissue distribution, high expression in spleen, liver, kidney, heart and duodenum.

The protein localises to the cell membrane. It localises to the basolateral cell membrane. The catalysed reaction is Fe(2+)(in) = Fe(2+)(out). In terms of biological role, transports Fe(2+) from the inside of a cell to the outside of the cell, playing a key role for maintaining systemic iron homeostasis. Transports iron from intestinal, splenic, hepatic cells, macrophages and erythrocytes into the blood to provide iron to other tissues. Controls therefore dietary iron uptake, iron recycling by macrophages and erythrocytes, and release of iron stores in hepatocytes. When iron is in excess in serum, circulating HAMP/hepcidin levels increase resulting in a degradation of SLC40A1, thus limiting the iron efflux to plasma. This is Ferroportin from Mus musculus (Mouse).